Reading from the N-terminus, the 138-residue chain is Large ribosomal subunit protein uL16 (138 aa).

This sequence belongs to the universal ribosomal protein uL16 family. As to quaternary structure, part of the 50S ribosomal subunit.

In terms of biological role, binds 23S rRNA and is also seen to make contacts with the A and possibly P site tRNAs. The sequence is that of Large ribosomal subunit protein uL16 from Ureaplasma urealyticum serovar 10 (strain ATCC 33699 / Western).